Consider the following 372-residue polypeptide: tRNA-specific 2-thiouridylase MnmA (372 aa).

ATP is bound by residues Gly-16 to Ser-23 and Met-42. The interval Asn-102 to Asp-104 is interaction with target base in tRNA. Cys-107 functions as the Nucleophile in the catalytic mechanism. Cys-107 and Cys-205 are disulfide-bonded. Gly-132 serves as a coordination point for ATP. An interaction with tRNA region spans residues Lys-155–Gln-157. The active-site Cysteine persulfide intermediate is the Cys-205. The tract at residues Arg-317 to Tyr-318 is interaction with tRNA.

Belongs to the MnmA/TRMU family.

The protein resides in the cytoplasm. It carries out the reaction S-sulfanyl-L-cysteinyl-[protein] + uridine(34) in tRNA + AH2 + ATP = 2-thiouridine(34) in tRNA + L-cysteinyl-[protein] + A + AMP + diphosphate + H(+). In terms of biological role, catalyzes the 2-thiolation of uridine at the wobble position (U34) of tRNA, leading to the formation of s(2)U34. This is tRNA-specific 2-thiouridylase MnmA from Shewanella baltica (strain OS223).